We begin with the raw amino-acid sequence, 121 residues long: MRNWRWLLLVLAVLLAWLQYRFWFGPGNSGEVMMLEAQVAHQTQDNEGLRQRNQALAAEVKDLKDGEAAIEERARSELGMIKPGETFYRVVEDAPLPAPASAEASAPAQQAPEPVDPVDHP.

Topologically, residues 1–6 (MRNWRW) are cytoplasmic. A helical transmembrane segment spans residues 7 to 24 (LLLVLAVLLAWLQYRFWF). At 25–121 (GPGNSGEVMM…PEPVDPVDHP (97 aa)) the chain is on the periplasmic side. Positions 31 to 66 (EVMMLEAQVAHQTQDNEGLRQRNQALAAEVKDLKDG) form a coiled coil. The segment at 98 to 121 (APASAEASAPAQQAPEPVDPVDHP) is disordered. A compositionally biased stretch (low complexity) spans 99–113 (PASAEASAPAQQAPE).

Belongs to the FtsB family. As to quaternary structure, part of a complex composed of FtsB, FtsL and FtsQ.

Its subcellular location is the cell inner membrane. Its function is as follows. Essential cell division protein. May link together the upstream cell division proteins, which are predominantly cytoplasmic, with the downstream cell division proteins, which are predominantly periplasmic. In Xanthomonas axonopodis pv. citri (strain 306), this protein is Cell division protein FtsB.